The primary structure comprises 101 residues: uncharacterized protein (101 aa).

Residues Val17–Phe37 form a helical membrane-spanning segment.

The protein localises to the endoplasmic reticulum membrane. This is an uncharacterized protein from Schizosaccharomyces pombe (strain 972 / ATCC 24843) (Fission yeast).